The primary structure comprises 365 residues: S-adenosylmethionine decarboxylase proenzyme (365 aa).

Catalysis depends on residues E31 and E34. The active-site Schiff-base intermediate with substrate; via pyruvic acid is S87. Residue S87 is modified to Pyruvic acid (Ser); by autocatalysis. C101 functions as the Proton donor; for catalytic activity in the catalytic mechanism. Catalysis depends on proton acceptor; for processing activity residues S248 and H263.

Belongs to the eukaryotic AdoMetDC family. Heterotetramer of two alpha and two beta chains. Pyruvate is required as a cofactor. Post-translationally, is synthesized initially as an inactive proenzyme. Formation of the active enzyme involves a self-maturation process in which the active site pyruvoyl group is generated from an internal serine residue via an autocatalytic post-translational modification. Two non-identical subunits are generated from the proenzyme in this reaction, and the pyruvate is formed at the N-terminus of the alpha chain, which is derived from the carboxyl end of the proenzyme. The post-translation cleavage follows an unusual pathway, termed non-hydrolytic serinolysis, in which the side chain hydroxyl group of the serine supplies its oxygen atom to form the C-terminus of the beta chain, while the remainder of the serine residue undergoes an oxidative deamination to produce ammonia and the pyruvoyl group blocking the N-terminus of the alpha chain.

The catalysed reaction is S-adenosyl-L-methionine + H(+) = S-adenosyl 3-(methylsulfanyl)propylamine + CO2. It participates in amine and polyamine biosynthesis; S-adenosylmethioninamine biosynthesis; S-adenosylmethioninamine from S-adenosyl-L-methionine: step 1/1. This Onchocerca volvulus protein is S-adenosylmethionine decarboxylase proenzyme (smd-1).